The sequence spans 1069 residues: Rab GTPase-activating protein 1 (1069 aa).

The tract at residues 1–79 is disordered; that stretch reads MDDKASVGKI…DPPMDDQPGE (79 aa). Residues 7–22 are compositionally biased toward low complexity; it reads VGKISVSSDSVSTLNS. Position 42 is a phosphoserine (S42). The 157-residue stretch at 142 to 298 folds into the PID domain; sequence EDSVVFSKLT…IFTFSVSLEI (157 aa). At S360 the chain carries Phosphoserine. The disordered stretch occupies residues 482–527; the sequence is ERERRKTTASPSVRLPQSGSQSSVIPSPPEDDEEEDNDEPLLSGSG. Polar residues predominate over residues 489–506; that stretch reads TASPSVRLPQSGSQSSVI. A compositionally biased stretch (acidic residues) spans 510-520; the sequence is PEDDEEEDNDE. One can recognise a Rab-GAP TBC domain in the interval 566–752; that stretch reads GVPEALRGEV…HIIDLLLCEG (187 aa). A coiled-coil region spans residues 798-1047; sequence KKLMELACNM…ALNEVQAAKK (250 aa). A Phosphothreonine modification is found at T996.

In terms of assembly, interacts with RAB6A and tubulin gamma.

It is found in the cytoplasm. The protein localises to the cytosol. It localises to the cytoskeleton. Its subcellular location is the microtubule organizing center. The protein resides in the centrosome. May act as a GTPase-activating protein of RAB6A. May play a role in microtubule nucleation by centrosome. May participate in a RAB6A-mediated pathway involved in the metaphase-anaphase transition. This is Rab GTPase-activating protein 1 (RABGAP1) from Homo sapiens (Human).